The primary structure comprises 176 residues: MAKAEKVTAVAEIAEQFKSSTATVVTEYRGLSVGKLTELRRALGAEATYSVAKNTLVKRAAAEAGVEGLDDLFVGPTAITFIKGEPVNAAKALKTFAKENKALIIKGGYMDGAALSVAEVEQIADLETREVLLAKLAGALKGNLAKAAGLFNAPASQVARLAAALEEKKRAEGGAE.

It belongs to the universal ribosomal protein uL10 family. In terms of assembly, part of the ribosomal stalk of the 50S ribosomal subunit. The N-terminus interacts with L11 and the large rRNA to form the base of the stalk. The C-terminus forms an elongated spine to which L12 dimers bind in a sequential fashion forming a multimeric L10(L12)X complex.

Forms part of the ribosomal stalk, playing a central role in the interaction of the ribosome with GTP-bound translation factors. The protein is Large ribosomal subunit protein uL10 of Nocardia farcinica (strain IFM 10152).